We begin with the raw amino-acid sequence, 215 residues long: Guanylate kinase (215 aa).

The Guanylate kinase-like domain occupies 6–185; sequence GAILVLSGPS…SEKLLLSIAR (180 aa). 13-20 is a binding site for ATP; it reads GPSGSGKS.

Belongs to the guanylate kinase family.

It is found in the cytoplasm. It carries out the reaction GMP + ATP = GDP + ADP. Essential for recycling GMP and indirectly, cGMP. The polypeptide is Guanylate kinase (Wolinella succinogenes (strain ATCC 29543 / DSM 1740 / CCUG 13145 / JCM 31913 / LMG 7466 / NCTC 11488 / FDC 602W) (Vibrio succinogenes)).